The primary structure comprises 341 residues: MATNIAINGMGRIGRMVLRIALNNKNLNVKAINASYPPETIAHLLNYDTTHGVYDKKVEPIESGIKVNGHEIKLLSDRNPENLPWNEMDIDVVIEATGKFNHGDKAVAHINAGAKKVLLTGPSKGGDVQMIVKGVNDNQLDIDTYDIFSNASCTTNCIGPVAKVLNDKFGIINGLMTTVHAITNDQKNIDNPHKDLRRARSCNESIIPTSTGAAKALKEVLPEVEGKLHGMALRVPTKNVSLVDLVVDLEQNVTVTQVNDAFKNADLSGVLDVEEAPLVSVDFNTNPHSAIIDSQSTMVMGQNKVKVIAWYDNEWGYSNRVVEVADKIGQLIDDKAMVKAI.

NAD(+) is bound by residues 12 to 13, arginine 78, and threonine 120; that span reads RI. D-glyceraldehyde 3-phosphate is bound by residues 152–154 and threonine 183; that span reads SCT. Cysteine 153 (nucleophile) is an active-site residue. Asparagine 184 contributes to the NAD(+) binding site. D-glyceraldehyde 3-phosphate contacts are provided by residues arginine 198, 211–212, and arginine 234; that span reads TG. Residue asparagine 313 participates in NAD(+) binding.

It belongs to the glyceraldehyde-3-phosphate dehydrogenase family. In terms of assembly, homotetramer.

It is found in the cytoplasm. The enzyme catalyses D-glyceraldehyde 3-phosphate + phosphate + NAD(+) = (2R)-3-phospho-glyceroyl phosphate + NADH + H(+). It functions in the pathway carbohydrate degradation; glycolysis; pyruvate from D-glyceraldehyde 3-phosphate: step 1/5. Functionally, catalyzes the oxidative phosphorylation of glyceraldehyde 3-phosphate (G3P) to 1,3-bisphosphoglycerate (BPG) using the cofactor NAD. The first reaction step involves the formation of a hemiacetal intermediate between G3P and a cysteine residue, and this hemiacetal intermediate is then oxidized to a thioester, with concomitant reduction of NAD to NADH. The reduced NADH is then exchanged with the second NAD, and the thioester is attacked by a nucleophilic inorganic phosphate to produce BPG. The protein is Glyceraldehyde-3-phosphate dehydrogenase 2 (gapA2) of Staphylococcus epidermidis (strain ATCC 35984 / DSM 28319 / BCRC 17069 / CCUG 31568 / BM 3577 / RP62A).